The primary structure comprises 491 residues: Aspartyl/glutamyl-tRNA(Asn/Gln) amidotransferase subunit B (491 aa).

This sequence belongs to the GatB/GatE family. GatB subfamily. Heterotrimer of A, B and C subunits.

It catalyses the reaction L-glutamyl-tRNA(Gln) + L-glutamine + ATP + H2O = L-glutaminyl-tRNA(Gln) + L-glutamate + ADP + phosphate + H(+). The enzyme catalyses L-aspartyl-tRNA(Asn) + L-glutamine + ATP + H2O = L-asparaginyl-tRNA(Asn) + L-glutamate + ADP + phosphate + 2 H(+). Allows the formation of correctly charged Asn-tRNA(Asn) or Gln-tRNA(Gln) through the transamidation of misacylated Asp-tRNA(Asn) or Glu-tRNA(Gln) in organisms which lack either or both of asparaginyl-tRNA or glutaminyl-tRNA synthetases. The reaction takes place in the presence of glutamine and ATP through an activated phospho-Asp-tRNA(Asn) or phospho-Glu-tRNA(Gln). In Paraburkholderia phytofirmans (strain DSM 17436 / LMG 22146 / PsJN) (Burkholderia phytofirmans), this protein is Aspartyl/glutamyl-tRNA(Asn/Gln) amidotransferase subunit B.